Reading from the N-terminus, the 190-residue chain is dTTP/UTP pyrophosphatase (190 aa).

Asp-70 serves as the catalytic Proton acceptor.

Belongs to the Maf family. YhdE subfamily. A divalent metal cation serves as cofactor.

The protein localises to the cytoplasm. The catalysed reaction is dTTP + H2O = dTMP + diphosphate + H(+). The enzyme catalyses UTP + H2O = UMP + diphosphate + H(+). In terms of biological role, nucleoside triphosphate pyrophosphatase that hydrolyzes dTTP and UTP. May have a dual role in cell division arrest and in preventing the incorporation of modified nucleotides into cellular nucleic acids. This chain is dTTP/UTP pyrophosphatase, found in Gloeobacter violaceus (strain ATCC 29082 / PCC 7421).